A 233-amino-acid chain; its full sequence is Phosphonates import ATP-binding protein PhnC 1 (233 aa).

Positions 2 to 227 (LSVSGLTKRY…PAAALDREDI (226 aa)) constitute an ABC transporter domain. An ATP-binding site is contributed by 34–41 (GRSGAGKT).

This sequence belongs to the ABC transporter superfamily. Phosphonates importer (TC 3.A.1.9.1) family. The complex is composed of two ATP-binding proteins (PhnC), two transmembrane proteins (PhnE) and a solute-binding protein (PhnD).

It localises to the cell membrane. It catalyses the reaction phosphonate(out) + ATP + H2O = phosphonate(in) + ADP + phosphate + H(+). In terms of biological role, part of the ABC transporter complex PhnCDE involved in phosphonates import. Responsible for energy coupling to the transport system. The sequence is that of Phosphonates import ATP-binding protein PhnC 1 from Natronomonas pharaonis (strain ATCC 35678 / DSM 2160 / CIP 103997 / JCM 8858 / NBRC 14720 / NCIMB 2260 / Gabara) (Halobacterium pharaonis).